Here is a 150-residue protein sequence, read N- to C-terminus: Globin-2 (150 aa).

The 140-residue stretch at 11–150 (PLSDAEKNKI…MICILLSSAY (140 aa)) folds into the Globin domain. Residues His74 and His106 each coordinate heme b.

The protein belongs to the globin family. Monomer.

The sequence is that of Globin-2 from Mordacia mordax (Southern hemisphere lamprey).